A 340-amino-acid chain; its full sequence is Glyceraldehyde-3-phosphate dehydrogenase, cytosolic (340 aa).

NAD(+) contacts are provided by residues 16–17 (RI), aspartate 38, and arginine 85. D-glyceraldehyde 3-phosphate is bound by residues 156–158 (SCT), threonine 187, 216–217 (TG), and arginine 239. Catalysis depends on cysteine 157, which acts as the Nucleophile. Asparagine 321 contributes to the NAD(+) binding site.

It belongs to the glyceraldehyde-3-phosphate dehydrogenase family. As to quaternary structure, homotetramer.

It localises to the cytoplasm. It catalyses the reaction D-glyceraldehyde 3-phosphate + phosphate + NAD(+) = (2R)-3-phospho-glyceroyl phosphate + NADH + H(+). It participates in carbohydrate degradation; glycolysis; pyruvate from D-glyceraldehyde 3-phosphate: step 1/5. Its function is as follows. Key enzyme in glycolysis that catalyzes the first step of the pathway by converting D-glyceraldehyde 3-phosphate (G3P) into 3-phospho-D-glyceroyl phosphate. Essential for the maintenance of cellular ATP levels and carbohydrate metabolism. The protein is Glyceraldehyde-3-phosphate dehydrogenase, cytosolic of Taxus baccata (English yew).